Consider the following 275-residue polypeptide: NH(3)-dependent NAD(+) synthetase (275 aa).

ATP is bound at residue 50 to 57 (GISGGVDS). Asp-56 contributes to the Mg(2+) binding site. Arg-147 contributes to the deamido-NAD(+) binding site. Residue Thr-167 coordinates ATP. Position 172 (Glu-172) interacts with Mg(2+). Deamido-NAD(+) is bound by residues Lys-180 and Asp-187. 2 residues coordinate ATP: Lys-196 and Thr-218. 267–268 (HK) contacts deamido-NAD(+).

This sequence belongs to the NAD synthetase family. Homodimer.

It catalyses the reaction deamido-NAD(+) + NH4(+) + ATP = AMP + diphosphate + NAD(+) + H(+). It functions in the pathway cofactor biosynthesis; NAD(+) biosynthesis; NAD(+) from deamido-NAD(+) (ammonia route): step 1/1. Functionally, catalyzes the ATP-dependent amidation of deamido-NAD to form NAD. Uses ammonia as a nitrogen source. The protein is NH(3)-dependent NAD(+) synthetase of Pseudomonas aeruginosa (strain LESB58).